Consider the following 86-residue polypeptide: Putative membrane protein insertion efficiency factor (86 aa).

This sequence belongs to the UPF0161 family.

It is found in the cell inner membrane. Functionally, could be involved in insertion of integral membrane proteins into the membrane. The sequence is that of Putative membrane protein insertion efficiency factor from Mannheimia succiniciproducens (strain KCTC 0769BP / MBEL55E).